The chain runs to 1059 residues: Zinc finger protein 865 (1059 aa).

Disordered regions lie at residues 1–24 (MEANPAGSGAGGGGSSGIGGEDGV), 58–142 (LPCA…DAAF), and 161–206 (NLKR…CDPT). A compositionally biased stretch (gly residues) spans 8–21 (SGAGGGGSSGIGGE). Over residues 61–78 (APGPPPQPPPQPPPPQYD) the composition is skewed to pro residues. The span at 93–119 (SSSSSSSSSSSSSSSSSSSSSSSSSQA) shows a compositional bias: low complexity. Pro residues-rich tracts occupy residues 124-137 (PPLPPAFGAPPPPL) and 183-198 (APGPLPAPSQTPPGPP). 2 C2H2-type zinc fingers span residues 224–246 (FPCGVCQKSFKQSSHLVQHMLVH) and 252–274 (YECGVCGRTYNHVSSLIRHRRCH). A disordered region spans residues 275 to 342 (KDVPPAAGGP…PAGVGVPPPA (68 aa)). Residues 281 to 296 (AGGPPQPGPHLPPLGL) are compositionally biased toward pro residues. Low complexity-rich tracts occupy residues 297–316 (PAPAASAATAAAPSTVSSGP) and 324–337 (APSADGSAAPAGVG). 4 C2H2-type zinc fingers span residues 350–372 (FACPLCWKVFKKPSHLHQHQIIH), 378–400 (FSCSVCSKSFNRRESLKRHVKTH), 407–429 (LPCGICGKAFRDASYLLKHQAAH), and 441–463 (YPCDLCGKSYSAPQSLLRHKAAH). Residues 461–503 (AAHAPPAAAAEAPKDGAASAPQPPPTFPPGPYLLPPDPPTTDS) are disordered. Low complexity predominate over residues 463-480 (HAPPAAAAEAPKDGAASA). A compositionally biased stretch (pro residues) spans 481–499 (PQPPPTFPPGPYLLPPDPP). 5 consecutive C2H2-type zinc fingers follow at residues 550-572 (FCCGICGRGFGRRETLKRHERIH), 578-600 (HQCPVCGKRFRESFHLSKHHVVH), 606-628 (YKCELCGKVFGYPQSLTRHRQVH), 669-691 (YACSDCGEHFPDLFHVMSHKEVH), and 697-719 (YGCDACGKTFGFIENLMWHKLVH). The disordered stretch occupies residues 726 to 747 (LLPPAPGGLQPPDGSSGTDAAS). C2H2-type zinc fingers lie at residues 792–814 (FSCATCGQSFKHFLGLVTHKYVH), 820–842 (LGCGLCGQSFAGAYDLLLHRRSH), 848–870 (FRCPVCGKRFWEAALLMRHQRCH), 876–898 (YRCGVCGRGFLRSWYLRQHRVVH), 904–926 (FKCGVCAKRFAQSSSLAEHRRLH), 932–954 (QRCSACGKTFRYRSNLLEHQRLH), 960–982 (YRCEHCGKGFFYLSSVLRHQRAH), 989–1011 (LRCPACLKAFKDPGYFRKHLAAH), and 1017–1039 (FRCSSCGEGFANTYGLKKHRLAH). Lysine 802 participates in a covalent cross-link: Glycyl lysine isopeptide (Lys-Gly) (interchain with G-Cter in SUMO2). Lysine 1040 is covalently cross-linked (Glycyl lysine isopeptide (Lys-Gly) (interchain with G-Cter in SUMO2)).

It belongs to the krueppel C2H2-type zinc-finger protein family.

Its subcellular location is the nucleus. Its function is as follows. May be involved in transcriptional regulation. The sequence is that of Zinc finger protein 865 (ZNF865) from Homo sapiens (Human).